The following is a 184-amino-acid chain: Large ribosomal subunit protein uL15 (184 aa).

A disordered region spans residues 1–50; that stretch reads MDLSSLRPAKGAVKNKKRVGRGQGSGNGTTAGKGNKGQQARSGYKRPINE. Positions 21–35 are enriched in gly residues; sequence RGQGSGNGTTAGKGN.

The protein belongs to the universal ribosomal protein uL15 family. In terms of assembly, part of the 50S ribosomal subunit.

Its function is as follows. Binds to the 23S rRNA. The polypeptide is Large ribosomal subunit protein uL15 (Chlorobium luteolum (strain DSM 273 / BCRC 81028 / 2530) (Pelodictyon luteolum)).